The following is a 241-amino-acid chain: MATVSMRDMLKAGVHFGHQTRYWNPKMKPFIFGARNKVHIINLEKTVPMFNEALAELSKISSRKGKILFVGTKRAASEAVKEAANSCDQFFVNHRWLGGMLTNWKTVRQSIKRLKDLETQSQDGTFDKLTKKEALMRTRELEKLENSLGGIKDMGGLPDALFVIDADHEHIAIKEANNLGIPVFAIVDTNSDPDGVDFVIPGNDDAIRAVSLYLNAVAATVREGRSQDLAAQAEESFVEAE.

It belongs to the universal ribosomal protein uS2 family.

In Cronobacter sakazakii (strain ATCC BAA-894) (Enterobacter sakazakii), this protein is Small ribosomal subunit protein uS2.